We begin with the raw amino-acid sequence, 470 residues long: Aminoacyl transferase sphA (470 aa).

Pyridoxal 5'-phosphate contacts are provided by Ser212, His244, and Thr272. Residue Lys275 is modified to N6-(pyridoxal phosphate)lysine.

This sequence belongs to the class-II pyridoxal-phosphate-dependent aminotransferase family. BioF subfamily. In terms of assembly, homodimer. Pyridoxal 5'-phosphate is required as a cofactor.

It catalyses the reaction aminomalonate + (3R)-hydroxyoctadeca-4,10-dienoyl-[ACP] = 3-oxopresphingofungin + holo-[ACP] + CO2. It participates in secondary metabolite biosynthesis. Functionally, aminoacyl transferase; part of the gene cluster that mediates the biosynthesis of sphingofungins, bioactive molecules acting as sphingolipid inhibitors via inhibiting serine palmitoyl transferase (SPT). Within the pathway, sphA transfers aminomalonate onto the sphB product 3-hydroxyoctadeca-4,10-dienoyl-ACP to produce 3-keto-presphingofungin. The substrate specificity of sphA using only aminomalonate in Aspergillus fumigatus is responsible for the biosynthesis of sphingofungins B and C but not E and F like in Byssochlamys spectabilis. The PKS sphB does not contain any putative thioesterase domain for releasing the nascent polyketide chain and it has been suggested that aminoacyl transferases can facilitate the polyketide chain release. Sphingofungin biosynthesis starts with the PKS sphB that produces an C18 polyketide precursor 3-hydroxyoctadeca-4,10-dienoyl-ACP containing one delta-6 desaturation and one delta-12 desaturation. The aminoacyl transferase sphA uses the sphB product to produce 3-keto-presphingofungin by adding an aminomalonate molecule. SphF then reduces the C-3 ketone of 3-keto-presphingofungin which leads to presphingofungin. The cytochrome P450 monooxygenase sphH converts presphingofungin into sphingofungin B1 which is further converted to sphingofungin B by the dioxygenase sphC. SphC is also able to convert presphingofungin into sphingofungin B2. The acetyltransferase sphE acetylates sphingofungin B to produce sphingofungin C, but can also convert sphingofungin B1 into sphingofungin C1 and sphingofungin B2 into sphingofungin C2. Finally, sphingofungin C can be spontaneously converted into sphingofungin D. The sequence is that of Aminoacyl transferase sphA from Aspergillus fumigatus (strain CBS 144.89 / FGSC A1163 / CEA10) (Neosartorya fumigata).